Consider the following 116-residue polypeptide: MESSRVRLLPLLGAALLLMLPLLGTRAQEDAELQPRALDIYSAVDDASHEKELIEALQEVLKKLKSKRVPIYEKKYGQVPMCDAGEQCAVRKGARIGKLCDCPRGTSCNSFLLKCL.

A signal peptide spans 1 to 27 (MESSRVRLLPLLGAALLLMLPLLGTRA). Phosphotyrosine is present on Tyr-41. At Ser-48 the chain carries Phosphoserine. 3 cysteine pairs are disulfide-bonded: Cys-82–Cys-100, Cys-88–Cys-108, and Cys-102–Cys-115.

Belongs to the CART family. As to expression, hypothalamus. Found in neurons of the ventrolateral part of the arcuate nucleus, in the external zone of the median eminence, and also found in terminals in the periventricular part of the paraventricular nucleus.

The protein resides in the secreted. In terms of biological role, satiety factor closely associated with the actions of leptin and neuropeptide Y; this anorectic peptide inhibits both normal and starvation-induced feeding and completely blocks the feeding response induced by neuropeptide Y and regulated by leptin in the hypothalamus. It promotes neuronal development and survival in vitro. This is Cocaine- and amphetamine-regulated transcript protein (CARTPT) from Homo sapiens (Human).